Reading from the N-terminus, the 39-residue chain is Cytochrome b559 subunit beta (39 aa).

The chain crosses the membrane as a helical span at residues tryptophan 14–serine 30. Histidine 18 serves as a coordination point for heme.

Belongs to the PsbE/PsbF family. In terms of assembly, heterodimer of an alpha subunit and a beta subunit. PSII is composed of 1 copy each of membrane proteins PsbA, PsbB, PsbC, PsbD, PsbE, PsbF, PsbH, PsbI, PsbJ, PsbK, PsbL, PsbM, PsbT, PsbX, PsbY, PsbZ, Psb30/Ycf12, at least 3 peripheral proteins of the oxygen-evolving complex and a large number of cofactors. It forms dimeric complexes. Requires heme b as cofactor.

The protein localises to the plastid. Its subcellular location is the chloroplast thylakoid membrane. This b-type cytochrome is tightly associated with the reaction center of photosystem II (PSII). PSII is a light-driven water:plastoquinone oxidoreductase that uses light energy to abstract electrons from H(2)O, generating O(2) and a proton gradient subsequently used for ATP formation. It consists of a core antenna complex that captures photons, and an electron transfer chain that converts photonic excitation into a charge separation. This Ephedra sinica (Chinese ephedra) protein is Cytochrome b559 subunit beta.